A 2892-amino-acid chain; its full sequence is Inositol 1,4,5-trisphosphate receptor itr-1 (2892 aa).

Over 1 to 2475 (MNPSYGRVRK…YPLPEHSNSS (2475 aa)) the chain is Cytoplasmic. MIR domains are found at residues 192-246 (GNVI…IEPA), 319-379 (QNSV…VQVV), 386-466 (GGTA…LGPT), and 490-551 (NKEV…LLPV). A 1D-myo-inositol 1,4,5-trisphosphate-binding site is contributed by 357-361 (RMTNR). Residues 625 to 628 (KLLR) and 689 to 691 (YRK) each bind 1D-myo-inositol 1,4,5-trisphosphate. Positions 1030–1056 (MMRGGNKENSKDLAKTPSVTAEEAGRT) are disordered. The span at 1034-1043 (GNKENSKDLA) shows a compositional bias: basic and acidic residues. A helical transmembrane segment spans residues 2476–2496 (ISLGNLYSWFAVFSSFLLAHY). The Extracellular portion of the chain corresponds to 2497 to 2514 (LRHDKIYLHKTSLLILAS). The chain crosses the membrane as a helical span at residues 2515-2535 (LCFLLLSSIGVTLTLYIFGIL). Residues 2536 to 2572 (QLVNKIVHVVAFVSNKGLEDRPIAEILACRNLHYLLV) are Cytoplasmic-facing. A helical membrane pass occupies residues 2573–2593 (YLFICILGLLVHPMIYCILLF). Over 2594–2615 (DIIFTEETLQNVIASVTRNYQS) the chain is Extracellular. Residues 2616–2636 (IVWTGLLALILLYFFSILGFL) traverse the membrane as a helical segment. Over 2637 to 2735 (YFRHDFYLEV…FIWRVAYDMT (99 aa)) the chain is Cytoplasmic. Polar residues predominate over residues 2655–2666 (ATISSGIPSETC). The interval 2655-2685 (ATISSGIPSETCPSEGCPGLQPSEKDDNDDE) is disordered. The helical transmembrane segment at 2736–2756 (FFVVLIVIVLNLIFGVIIDTF) threads the bilayer. Residues 2757–2892 (GDLRAEKNEK…RAFMEQFQPR (136 aa)) lie on the Extracellular side of the membrane.

Belongs to the InsP3 receptor family. Interacts with myo-1, myo-2, unc-54/myo-4 and nmy-2. Also interacts with iri-1. As to expression, isoform a is expressed in the anterior cells of the pharyngeal terminal bulb, vulva, rectal epithelial cells, spicule protractor muscles of the proctodeum and male-specific neuron CP8 or CP9. Isoform d is expressed in the spermatheca, excretory cell, amphid socket cells, PDA motor neuron, spicule retractor muscles, gubernaculum retractor muscles, posterior oblique muscles, diagonal muscles and the vas deferens. Also expressed in the intestine, pharynx, pharyngeal isthmus, pharyngeal intestinal valve, somatic gonad, hypodermal cells of the vulva, uterine sheath cells, tail, head, LUA motor neuron and the embryonic epidermis (at protein level).

The protein resides in the endoplasmic reticulum membrane. Functionally, receptor for inositol 1,4,5-trisphosphate, a second messenger that regulates intracellular calcium homeostasis. Binds in vitro to both inositol 1,4,5-trisphosphate (1,4,5-InsP3) and inositol 2,4,5-trisphosphate (2,4,5-InsP3) with high affinity and does not discriminate between the phosphate at 1 or 2 position. Can also bind inositol 1,3,4,5-tetrakisphosphate (1,3,4,5-InsP4) and inositol 4,5-bisphosphate (4,5-InsP2), but with lower affinity. Acts as a timekeeper/rhythm generator via calcium signaling, affecting the defecation cycle and pharyngeal pumping. Affects normal hermaphrodite and male fertility as a participant in intracellular signaling by acting downstream of let-23/lin-3 which regulates ovulation, spermathecal valve dilation and male mating behavior. Important for early embryonic development; controls epidermal cell migration and may also regulate filopodial protrusive activity during epithelial morphogenesis. Component of inositol trisphosphate (IP3)-mediated downstream signaling pathways that controls amphid sensory neuronal (ASH)-mediated response to nose touch and benzaldehyde but not other ASH-mediated responses. Involved in modulating lifespan, acting downstream of transcription factor atf-6. The chain is Inositol 1,4,5-trisphosphate receptor itr-1 from Caenorhabditis elegans.